Consider the following 49-residue polypeptide: Peridinin-chlorophyll a-binding protein (49 aa).

Monomer. Post-translationally, binds 12 peridinin and 2 chlorophyll a molecules per monomer.

It localises to the plastid. Its subcellular location is the chloroplast. In terms of biological role, water-soluble antenna for capture of solar energy in the blue-green range. Peridinin is an asymmetric carotenoid. This Alexandrium cohorticula (Dinoflagellate) protein is Peridinin-chlorophyll a-binding protein.